Reading from the N-terminus, the 114-residue chain is T cell receptor beta variable 4-3 (114 aa).

Positions 1 to 21 (MGCRLLCCAVLCLLGAVPMET) are cleaved as a signal peptide. Positions 22–114 (GVTQTPRHLV…SALYLCASSQ (93 aa)) constitute an Ig-like domain. Cys42 and Cys110 are joined by a disulfide. 2 N-linked (GlcNAc...) asparagine glycosylation sites follow: Asn76 and Asn89.

Alpha-beta TR is a heterodimer composed of an alpha and beta chain; disulfide-linked. The alpha-beta TR is associated with the transmembrane signaling CD3 coreceptor proteins to form the TR-CD3 (TcR or TCR). The assembly of alpha-beta TR heterodimers with CD3 occurs in the endoplasmic reticulum where a single alpha-beta TR heterodimer associates with one CD3D-CD3E heterodimer, one CD3G-CD3E heterodimer and one CD247 homodimer forming a stable octameric structure. CD3D-CD3E and CD3G-CD3E heterodimers preferentially associate with TR alpha and TR beta chains, respectively. The association of the CD247 homodimer is the last step of TcR assembly in the endoplasmic reticulum and is required for transport to the cell surface.

Its subcellular location is the cell membrane. In terms of biological role, v region of the variable domain of T cell receptor (TR) beta chain that participates in the antigen recognition. Alpha-beta T cell receptors are antigen specific receptors which are essential to the immune response and are present on the cell surface of T lymphocytes. Recognize peptide-major histocompatibility (MH) (pMH) complexes that are displayed by antigen presenting cells (APC), a prerequisite for efficient T cell adaptive immunity against pathogens. Binding of alpha-beta TR to pMH complex initiates TR-CD3 clustering on the cell surface and intracellular activation of LCK that phosphorylates the ITAM motifs of CD3G, CD3D, CD3E and CD247 enabling the recruitment of ZAP70. In turn ZAP70 phosphorylates LAT, which recruits numerous signaling molecules to form the LAT signalosome. The LAT signalosome propagates signal branching to three major signaling pathways, the calcium, the mitogen-activated protein kinase (MAPK) kinase and the nuclear factor NF-kappa-B (NF-kB) pathways, leading to the mobilization of transcription factors that are critical for gene expression and essential for T cell growth and differentiation. The T cell repertoire is generated in the thymus, by V-(D)-J rearrangement. This repertoire is then shaped by intrathymic selection events to generate a peripheral T cell pool of self-MH restricted, non-autoaggressive T cells. Post-thymic interaction of alpha-beta TR with the pMH complexes shapes TR structural and functional avidity. The sequence is that of T cell receptor beta variable 4-3 from Homo sapiens (Human).